Here is a 128-residue protein sequence, read N- to C-terminus: Large ribosomal subunit protein uL22 (128 aa).

This sequence belongs to the universal ribosomal protein uL22 family. As to quaternary structure, part of the 50S ribosomal subunit.

This protein binds specifically to 23S rRNA; its binding is stimulated by other ribosomal proteins, e.g. L4, L17, and L20. It is important during the early stages of 50S assembly. It makes multiple contacts with different domains of the 23S rRNA in the assembled 50S subunit and ribosome. Functionally, the globular domain of the protein is located near the polypeptide exit tunnel on the outside of the subunit, while an extended beta-hairpin is found that lines the wall of the exit tunnel in the center of the 70S ribosome. This Nitrobacter winogradskyi (strain ATCC 25391 / DSM 10237 / CIP 104748 / NCIMB 11846 / Nb-255) protein is Large ribosomal subunit protein uL22.